The primary structure comprises 483 residues: Glutamyl-tRNA(Gln) amidotransferase subunit A (483 aa).

Catalysis depends on charge relay system residues Lys76 and Ser151. Ser175 functions as the Acyl-ester intermediate in the catalytic mechanism.

This sequence belongs to the amidase family. GatA subfamily. Heterotrimer of A, B and C subunits.

It carries out the reaction L-glutamyl-tRNA(Gln) + L-glutamine + ATP + H2O = L-glutaminyl-tRNA(Gln) + L-glutamate + ADP + phosphate + H(+). Functionally, allows the formation of correctly charged Gln-tRNA(Gln) through the transamidation of misacylated Glu-tRNA(Gln) in organisms which lack glutaminyl-tRNA synthetase. The reaction takes place in the presence of glutamine and ATP through an activated gamma-phospho-Glu-tRNA(Gln). The polypeptide is Glutamyl-tRNA(Gln) amidotransferase subunit A (Nitrosospira multiformis (strain ATCC 25196 / NCIMB 11849 / C 71)).